Consider the following 65-residue polypeptide: Lantibiotic lacticin 3147 A2 (65 aa).

A propeptide spanning residues 1–36 is cleaved from the precursor; it reads MKEKNMKKNDTIELQLGKYLEDDMIELAEGDESHGG. At Thr-37 the chain carries 2-oxobutanoic acid. Residues Thr-38 and Thr-41 each carry the 2,3-didehydrobutyrine modification. 2,3-didehydroalanine (Ser) is present on residues Ser-45 and Ser-48. The segment at residues 52–56 is a cross-link (lanthionine (Ser-Cys)); it reads STNTC. Cross-links (beta-methyllanthionine (Thr-Cys)) lie at residues 58 to 61 and 62 to 65; these read TTKC and TRAC.

Maturation of lantibiotics involves the enzymatic conversion of Thr, and Ser into dehydrated AA and the formation of thioether bonds with cysteine. This is followed by membrane translocation and cleavage of the modified precursor. In terms of processing, it is not established whether the 2,3-didehydrobutyrines are the E- or Z-isomers. In the NMR model they were assumed to be the Z-isomer.

The protein localises to the secreted. Its function is as follows. Lanthionine-containing peptide antibiotic (lantibiotic) active on Gram-positive bacteria. The bactericidal activity of lantibiotics is based on depolarization of energized bacterial cytoplasmic membranes, initiated by the formation of aqueous transmembrane pores. When present individually lacticin 3147 A2 exhibits weak activity towards L.lactis strain AM2 and L.lactis strain HP, and no activity towards L.lactis strain IFPL359, but when combined with lacticin 3147 A1 it displays strong activity towards all three strains. This chain is Lantibiotic lacticin 3147 A2, found in Lactococcus lactis subsp. lactis (Streptococcus lactis).